The sequence spans 398 residues: MKQLTILGSTGSIGCSTLDVVRHNPEHFRVVALVAGKNVTRMVEQCLEFSPRYAVMDDEASAKLLKTMLQQQGSRTEVLSGQQAACDMAALEDVDQVMAAIVGAAGLLPTLAAIRAGKTILLANKESLVTCGRLFMDAVKQSKAQLLPVDSEHNAIFQSLPQPIQHNLGYADLEQNGVVSILLTGSGGPFRETPLRDLATMTPDQACRHPNWSMGRKISVDSATMMNKGLEYIEARWLFNASASQMEVLIHPQSVIHSMVRYQDGSVLAQLGEPDMRTPIAHTMAWPNRVNSGVKPLDFCKLSALTFAAPDYDRYPCLKLAMEAFEQGQAATTALNAANEITVAAFLAQQIRFTDIAALNLSVLEKMDMREPQCVDDVLSVDASAREVARKEVMRLAS.

NADPH is bound by residues T10, G11, S12, I13, G36, K37, N38, and N124. K125 contacts 1-deoxy-D-xylulose 5-phosphate. Residue E126 coordinates NADPH. D150 contributes to the Mn(2+) binding site. The 1-deoxy-D-xylulose 5-phosphate site is built by S151, E152, S186, and H209. E152 is a Mn(2+) binding site. Position 215 (G215) interacts with NADPH. 1-deoxy-D-xylulose 5-phosphate contacts are provided by S222, N227, K228, and E231. E231 provides a ligand contact to Mn(2+).

The protein belongs to the DXR family. As to quaternary structure, homodimer. Mg(2+) is required as a cofactor. The cofactor is Mn(2+).

It carries out the reaction 2-C-methyl-D-erythritol 4-phosphate + NADP(+) = 1-deoxy-D-xylulose 5-phosphate + NADPH + H(+). Its pathway is isoprenoid biosynthesis; isopentenyl diphosphate biosynthesis via DXP pathway; isopentenyl diphosphate from 1-deoxy-D-xylulose 5-phosphate: step 1/6. Its function is as follows. Catalyzes the NADPH-dependent rearrangement and reduction of 1-deoxy-D-xylulose-5-phosphate (DXP) to 2-C-methyl-D-erythritol 4-phosphate (MEP). This is 1-deoxy-D-xylulose 5-phosphate reductoisomerase from Escherichia coli O157:H7.